Consider the following 310-residue polypeptide: Zinc transporter ZIP9 (310 aa).

Helical transmembrane passes span I7–A27, L35–I55, A108–G128, I148–A168, L178–F198, H212–S232, G246–P266, and V289–H309.

Belongs to the ZIP transporter (TC 2.A.5) family. In terms of tissue distribution, expressed in brain, liver, ovary, and testis.

Its subcellular location is the golgi apparatus. The protein resides in the trans-Golgi network membrane. The protein localises to the cell membrane. It localises to the cytoplasm. It is found in the perinuclear region. Its subcellular location is the mitochondrion. The protein resides in the nucleus. The catalysed reaction is Zn(2+)(in) = Zn(2+)(out). In terms of biological role, has dual functions as a membrane-bound androgen receptor and as an androgen-dependent zinc transporter both of which are mediated through G protein activation and are required for the androgen-dependent apoptotic response. Upon androgen binding, mediates apoptosis by directly activating a stimulatory G protein that leads to increased cAMP levels and MAP kinase activity and which is accompanied by increased intracellular free zinc levels. The protein is Zinc transporter ZIP9 of Micropogonias undulatus (Atlantic croaker).